The primary structure comprises 752 residues: MEKNTNTNHTSDDNNDKNHTNEEQEKIILNPNFEDGLNNWTGRACKIVLHESMDSGKIVPLSGKVFAAATQRKDTWNGIQQEISGRFRRKRVYEVTAVVRIFGNNVTSATVQATLWVLNANKREQYIVIANVQATDKNWVELKGKFVIHGSPSRVILYLEGPPPRADILLNSLVVQHAKRNRPSPPPFYENPGFGVNIVENSEVLDGGTKPWFTLGNCKLSVGQGAPRTLPPMARDTLGPHKPLGGNYIVVTNRTQTWMGPAQMITDKIKLFLTYQISAWVKLGVGVSGSSMSPQNVNIALSVDNQWVNGGQVEVTVGDTWHEIAGSFRLEKQPQNVMVYVQGPGAGIDLMIAALQIFPVDRRERVRCLKRQVDEVRKRDIVLKFSGLNDDESFDLFPYIVKVKQTYNSFPVGTCINRTDIDNEDFVDFFTKNFNWAVFGNELKWYATEAERGKVNYQDADDMLDLCIGNNINVRGHCIFWEVESTVQPWVRQLNKTDLMNAVQKRLTDLLTRYKGKFKHYDVNNEMLHGSFYQDRLGKGVRALMFNIAHKLDPSPLLFVNDYHVEDGDDPRSSPEKYIKLVLDLEAQGATVGGIGIQGHIDSPVGAIVCSALDMLSVLGRPIWFTELDVSSSNEYVRGEDLEVMLWEAFAHPSVEGIMLWGFWELSMSRENANLVEGEGEVNEAGKRFLEVKQEWLSHAYGIINDESEFTFRGYHGTYAVEICTPAGIVLKTFVVEKGDTPLVISIDLSSL.

The segment at 1–22 is disordered; it reads MEKNTNTNHTSDDNNDKNHTNE. Basic and acidic residues predominate over residues 10–22; sequence TSDDNNDKNHTNE. CBM-cenC domains follow at residues 26-163 and 197-344; these read KIIL…EGPP and NIVE…VQGP. A GH10 domain is found at 397–692; that stretch reads FPYIVKVKQT…NEAGKRFLEV (296 aa). E526 acts as the Proton donor in catalysis. Catalysis depends on E627, which acts as the Nucleophile.

The protein belongs to the glycosyl hydrolase 10 (cellulase F) family. In terms of tissue distribution, confined to immature xylems.

It carries out the reaction Endohydrolysis of (1-&gt;4)-beta-D-xylosidic linkages in xylans.. It functions in the pathway glycan degradation; xylan degradation. Binds to and hydrolyzes insoluble and soluble xylan substrates. The polypeptide is Endo-1,4-beta-xylanase 3 (Arabidopsis thaliana (Mouse-ear cress)).